We begin with the raw amino-acid sequence, 100 residues long: MAPPTRQLLNAVLVLLLLLATNHQGTGVVVASELRCQCLTTLPRVDFKNIQSLTVTPPGPHCAQTEVIATLKDGHEVCLNPEAPLVQRIVQKILNKGKAN.

Residues 1 to 31 (MAPPTRQLLNAVLVLLLLLATNHQGTGVVVA) form the signal peptide. Intrachain disulfides connect Cys-36–Cys-62 and Cys-38–Cys-78.

This sequence belongs to the intercrine alpha (chemokine CxC) family. As to quaternary structure, homotetramer. In terms of tissue distribution, at least expressed in the lung and trachea.

The protein localises to the secreted. Chemotactic for human polymorphonuclear leukocytes but does not induce chemokinesis or an oxidative burst. Contributes to neutrophil activation during inflammation. This Rattus norvegicus (Rat) protein is C-X-C motif chemokine 2 (Cxcl2).